The primary structure comprises 317 residues: Ribosomal RNA small subunit methyltransferase H (317 aa).

S-adenosyl-L-methionine contacts are provided by residues 30–32 (GGH), Asp50, Tyr78, Asp95, and Gln102.

This sequence belongs to the methyltransferase superfamily. RsmH family.

Its subcellular location is the cytoplasm. The enzyme catalyses cytidine(1402) in 16S rRNA + S-adenosyl-L-methionine = N(4)-methylcytidine(1402) in 16S rRNA + S-adenosyl-L-homocysteine + H(+). In terms of biological role, specifically methylates the N4 position of cytidine in position 1402 (C1402) of 16S rRNA. This is Ribosomal RNA small subunit methyltransferase H from Nitrosomonas eutropha (strain DSM 101675 / C91 / Nm57).